A 349-amino-acid chain; its full sequence is Phosphoribosylformylglycinamidine cyclo-ligase (349 aa).

This sequence belongs to the AIR synthase family.

The protein resides in the cytoplasm. It carries out the reaction 2-formamido-N(1)-(5-O-phospho-beta-D-ribosyl)acetamidine + ATP = 5-amino-1-(5-phospho-beta-D-ribosyl)imidazole + ADP + phosphate + H(+). Its pathway is purine metabolism; IMP biosynthesis via de novo pathway; 5-amino-1-(5-phospho-D-ribosyl)imidazole from N(2)-formyl-N(1)-(5-phospho-D-ribosyl)glycinamide: step 2/2. This Lactobacillus delbrueckii subsp. bulgaricus (strain ATCC 11842 / DSM 20081 / BCRC 10696 / JCM 1002 / NBRC 13953 / NCIMB 11778 / NCTC 12712 / WDCM 00102 / Lb 14) protein is Phosphoribosylformylglycinamidine cyclo-ligase.